Here is a 603-residue protein sequence, read N- to C-terminus: Serine protease 56 (603 aa).

Residues 1–19 (MLLAVLLLLPLPSSWFAHG) form the signal peptide. The segment at 64 to 96 (SHECRGSGRPRPQALLQDPPEPGPCGERRPSTA) is disordered. Residue asparagine 97 is glycosylated (N-linked (GlcNAc...) asparagine). The 233-residue stretch at 105–337 (IVGGSAAPPG…FKDWLQEQMS (233 aa)) folds into the Peptidase S1 domain. Cysteine 130 and cysteine 146 are oxidised to a cystine. Residues histidine 145 and aspartate 191 each act as charge relay system in the active site. Disulfide bonds link cysteine 225–cysteine 292, cysteine 256–cysteine 271, and cysteine 282–cysteine 313. Serine 286 functions as the Charge relay system in the catalytic mechanism. 2 disordered regions span residues 442–474 (PARE…NGCP) and 573–603 (EGPW…ARQP).

Belongs to the peptidase S1 family. As to expression, expressed neural retina, cornea, sclera and optic nerve.

In terms of biological role, serine protease required during eye development. This is Serine protease 56 (PRSS56) from Homo sapiens (Human).